A 498-amino-acid polypeptide reads, in one-letter code: Interferon regulatory factor 5 (498 aa).

Threonine 10 is subject to Phosphothreonine. The Nuclear localization signal signature appears at 12–18 (PRRVRLK). Residues 14–122 (RVRLKPWLVA…QPYKIYEVCS (109 aa)) constitute a DNA-binding region (IRF tryptophan pentad repeat). Positions 121–207 (CSNGPAPTDS…SPLAPPPGNP (87 aa)) are disordered. A Nuclear export signal motif is present at residues 150–160 (LQRMLPSLSLT). A Phosphoserine; by TBK1 modification is found at serine 158. Residues 168 to 206 (TLQPPTLRPPTLQPPTLQPPVVLGPPAPDPSPLAPPPGN) are compositionally biased toward pro residues. Phosphoserine; by TBK1 is present on serine 293. Serine 301 carries the post-translational modification Phosphoserine. Glycyl lysine isopeptide (Lys-Gly) (interchain with G-Cter in ubiquitin) cross-links involve residues lysine 411 and lysine 412. 4 positions are modified to phosphoserine: serine 431, serine 435, serine 437, and serine 440. Position 446 is a phosphoserine; by IKKB (serine 446). Positions 478–498 (PPGAGLGVGQGPWPMHPAGMQ) are disordered.

It belongs to the IRF family. Homodimer, when phosphorylated. Interacts with TASL (via pLxIS motif); interaction takes place downstream of TLR7, TLR8 or TLR9, leading to its activation. Interacts with MYD88 and TRAF6. Post-translationally, phosphorylation of serine and threonine residues by IKBKB in a C-terminal autoinhibitory region, stimulates dimerization, transport into the nucleus, assembly with the coactivator CBP/EP300 and initiation of transcription. In terms of processing, 'Lys-63'-linked polyubiquitination by TRAF6 is required for activation.

It is found in the cytoplasm. The protein localises to the nucleus. With respect to regulation, maintained as a monomer in an autoinhibited state. Phosphorylation and activation follow the following steps: innate adapter protein TASL recruits IRF5, thereby licensing IRF5 for phosphorylation by IKBKB. Phosphorylated IRF5 dissociates from the adapter proteins, dimerizes, and then enters the nucleus to induce IFNs. Its activity is regulated as follows. (Microbial infection) Activated upon coronavirus SARS-CoV-2 infection. Functionally, transcription factor that plays a critical role in innate immunity by activating expression of type I interferon (IFN) IFNA and INFB and inflammatory cytokines downstream of endolysosomal toll-like receptors TLR7, TLR8 and TLR9. Regulates the transcription of type I IFN genes (IFN-alpha and IFN-beta) and IFN-stimulated genes (ISG) by binding to an interferon-stimulated response element (ISRE) in their promoters. Can efficiently activate both the IFN-beta (IFNB) and the IFN-alpha (IFNA) genes and mediate their induction downstream of the TLR-activated, MyD88-dependent pathway. Key transcription factor regulating the IFN response during SARS-CoV-2 infection. This is Interferon regulatory factor 5 from Homo sapiens (Human).